The primary structure comprises 150 residues: Thyroid hormone-inducible hepatic protein (150 aa).

The disordered stretch occupies residues K83–E104. S90 is modified (phosphoserine). Residues S90–E104 show a composition bias toward acidic residues.

It belongs to the SPOT14 family. As to quaternary structure, homodimer. Heterodimer with MID1IP1. Interacts with THRB and PLAGL1. In terms of tissue distribution, mainly expressed in tissues that synthesize triglycerides.

The protein resides in the nucleus. It is found in the cytoplasm. Functionally, plays a role in the regulation of lipogenesis, especially in lactating mammary gland. Important for the biosynthesis of triglycerides with medium-length fatty acid chains. May modulate lipogenesis by interacting with MID1IP1 and preventing its interaction with ACACA. May function as transcriptional coactivator. May modulate the transcription factor activity of THRB. This is Thyroid hormone-inducible hepatic protein (Thrsp) from Mus musculus (Mouse).